The sequence spans 395 residues: MSSLAPWRTTSWSPLGSPPSLEDALRLARTTRAFAVRRDGEGRALVTYLYGTPELFSLPGARELRGIVYREEDGTVLSRPFHKFFNFGEPLAPGEEAFKAFRDSMVPLFVAEKVDGYLAQAYLDGGELRFASRHSLNPPLVGALLRKAVDEEAMARLGKLLAAEGGRWTALLEVVDPEAPVMVPYQEPGVYLLALRSIGEGHYLLPGVHFPLPEALRYVRWEPRMDFDPHRFRGEIRDLQGVEGYVVTDGAEFVKFKTGWAFRLARFLMDPEGVFLEAYAEDRLDDLVGALAGREDLLRAVARAQDYLAGLYGEAVGAGDALRRMGLPRKEAWARVQEEAGRWGGFAPAYARAAMAAYEGGEAREAFLVELRKRSARKALEALHLFPRVGGELRG.

ATP is bound by residues Tyr-48, Arg-65, and Lys-83. Lys-113 (N6-AMP-lysine intermediate) is an active-site residue. The ATP site is built by Glu-173, Lys-255, and Lys-257. Mg(2+) is bound at residue Asp-285.

Mg(2+) serves as cofactor. Requires Mn(2+) as cofactor.

The catalysed reaction is ATP + (ribonucleotide)n-3'-hydroxyl + 5'-phospho-(ribonucleotide)m = (ribonucleotide)n+m + AMP + diphosphate.. In terms of biological role, RNA ligase that ligates single-stranded nucleic acids in an ATP-dependent manner. Catalyzes both inter- and intra-molecular single-stranded DNA (ssDNA) ligation to &gt;50% completion in a matter of hours at an elevated temperature, although favoring intra-molecular ligation on RNA and single-stranded DNA substrates. Is able to catalyze the adenylation reaction of ssDNA 3'-terminal phosphate (ssDNA 3'p) to 3'-adenylated DNA (ssDNA 3'pp5'A). Does not have significant 3'-adenylation activity with a 3'-phosphorylated nicked dsDNA substrate. This chain is RNA ligase 1, found in Thermus scotoductus.